The chain runs to 327 residues: Transaldolase (327 aa).

Lysine 132 acts as the Schiff-base intermediate with substrate in catalysis.

The protein belongs to the transaldolase family. Type 1 subfamily.

It localises to the cytoplasm. It catalyses the reaction D-sedoheptulose 7-phosphate + D-glyceraldehyde 3-phosphate = D-erythrose 4-phosphate + beta-D-fructose 6-phosphate. Its pathway is carbohydrate degradation; pentose phosphate pathway; D-glyceraldehyde 3-phosphate and beta-D-fructose 6-phosphate from D-ribose 5-phosphate and D-xylulose 5-phosphate (non-oxidative stage): step 2/3. Its function is as follows. Transaldolase is important for the balance of metabolites in the pentose-phosphate pathway. The protein is Transaldolase of Chlamydia trachomatis serovar D (strain ATCC VR-885 / DSM 19411 / UW-3/Cx).